The sequence spans 406 residues: Solute carrier family 22 member 18 (406 aa).

The next 10 helical transmembrane spans lie at 8–28, 43–63, 85–105, 140–160, 168–188, 226–246, 258–278, 295–315, 316–336, and 374–394; these read GIII…FMQF, VSFG…GPVF, ALYL…FLLF, LGLC…TLNT, AILA…CVPA, FLVK…FSII, AGYL…LVIG, LVFA…HFCF, LMPG…SMLT, and GVPI…LVLW.

This sequence belongs to the major facilitator (TC 2.A.1) superfamily. Organic cation transporter (TC 2.A.1.19) family. As to quaternary structure, interacts with RNF167. As to expression, expressed at high levels in fetal and adult kidney and liver, and extraembryonic membranes (yolk sac). Expressed at moderate levels in intestine, heart, lung and testis.

The protein localises to the apical cell membrane. Its function is as follows. May act as a transporter of organic cations based on a proton efflux antiport mechanism. May play a role in the transport of chloroquine and quinidine-related compounds in kidney. Plays a role in the regulation of lipid metabolism. The protein is Solute carrier family 22 member 18 (Slc67a1) of Mus musculus (Mouse).